Consider the following 162-residue polypeptide: Inner membrane protein YbjO (162 aa).

Residues 1–23 (MEDETLGFFKKTSSSHARLNVPA) are Periplasmic-facing. Residues 24 to 44 (LVQVAALAIIMIRGLDVLMIF) form a helical membrane-spanning segment. Over 45–66 (NTLGVRGIGEFIHRSVQTWSLT) the chain is Cytoplasmic. Residues 67–87 (LVFLSSLVLVFIEIWCAFSLV) form a helical membrane-spanning segment. Residues 88–94 (KGRRWAR) lie on the Periplasmic side of the membrane. Residues 95-115 (WLYLLTQITAASYLWAASLGY) form a helical membrane-spanning segment. Residues 116–162 (GYPELFSIPGESKREIFHSLMLQKLPDMLILMLLFVPSTSRRFFQLQ) are Cytoplasmic-facing.

It is found in the cell inner membrane. This Escherichia coli O157:H7 protein is Inner membrane protein YbjO (ybjO).